A 147-amino-acid chain; its full sequence is Transcriptional repressor NrdR (147 aa).

A zinc finger spans residues 3 to 34 (CLFCRSDDTKVIDSRTSEDGISIRRRRECQLC). In terms of domain architecture, ATP-cone spans 46–136 (LTVIKRNGTS…VYQDFDSLED (91 aa)).

Belongs to the NrdR family. Requires Zn(2+) as cofactor.

Negatively regulates transcription of bacterial ribonucleotide reductase nrd genes and operons by binding to NrdR-boxes. The polypeptide is Transcriptional repressor NrdR (Tropheryma whipplei (strain TW08/27) (Whipple's bacillus)).